We begin with the raw amino-acid sequence, 318 residues long: UAP56-interacting factor (318 aa).

N-acetylmethionine is present on methionine 1. The disordered stretch occupies residues 1–27 (MNRFSTRLMGATATPPPAPPKARSNEN). Threonine 14 is modified (phosphothreonine). Serine 24 carries the phosphoserine modification. Positions 27 to 45 (NLDKIDMSLDDIIKLNRKE) match the UAP56-binding motif motif. 2 positions are modified to phosphoserine: serine 61 and serine 118. A Glycyl lysine isopeptide (Lys-Gly) (interchain with G-Cter in SUMO1) cross-link involves residue lysine 140. The segment covering 163 to 180 (LNRKNNIPNNFTRSGNKL) has biased composition (polar residues). The disordered stretch occupies residues 163–183 (LNRKNNIPNNFTRSGNKLSHQ). Lysine 261 is covalently cross-linked (Glycyl lysine isopeptide (Lys-Gly) (interchain with G-Cter in SUMO2)).

This sequence belongs to the UIF family. As to quaternary structure, interacts with DDX39B/UAP56 and NXF1; interaction with DDX39B/UAP56 and NXF1 are mutually exclusive. Interacts with SSRP1; required for its recruitment to mRNAs. Interacts with CHTOP.

The protein localises to the nucleus. The protein resides in the nucleoplasm. Its subcellular location is the nucleus speckle. Required for mRNA export from the nucleus to the cytoplasm. Acts as an adapter that uses the DDX39B/UAP56-NFX1 pathway to ensure efficient mRNA export and delivering to the nuclear pore. Associates with spliced and unspliced mRNAs simultaneously with ALYREF/THOC4. The polypeptide is UAP56-interacting factor (FYTTD1) (Bos taurus (Bovine)).